We begin with the raw amino-acid sequence, 340 residues long: Fructose-1,6-bisphosphatase, cytosolic (340 aa).

Positions 71, 100, 121, 123, and 124 each coordinate Mg(2+). Substrate contacts are provided by residues 124–127 (DGSS), Asn215, Tyr247, Tyr267, and Lys277. Glu283 is a Mg(2+) binding site.

The protein belongs to the FBPase class 1 family. It depends on Mg(2+) as a cofactor.

The protein localises to the cytoplasm. It catalyses the reaction beta-D-fructose 1,6-bisphosphate + H2O = beta-D-fructose 6-phosphate + phosphate. The chain is Fructose-1,6-bisphosphatase, cytosolic from Solanum tuberosum (Potato).